The sequence spans 269 residues: Gene 51 glycoprotein (269 aa).

4 N-linked (GlcNAc...) asparagine; by host glycosylation sites follow: asparagine 53, asparagine 58, asparagine 74, and asparagine 78. Disordered regions lie at residues 67–87 and 103–137; these read LSTS…TTPY and MLNS…ASKN. A compositionally biased stretch (low complexity) spans 76–87; that stretch reads TSNTSYSQTTPY. The span at 103–112 shows a compositional bias: polar residues; it reads MLNSTPNKPL. Residues 113–136 show a composition bias toward low complexity; the sequence is SSTKLTPKSQSSSQSTKTTKQASK. N-linked (GlcNAc...) asparagine; by host glycans are attached at residues asparagine 137, asparagine 161, asparagine 170, and asparagine 191.

This Saimiriine herpesvirus 2 (strain 11) (SaHV-2) protein is Gene 51 glycoprotein (51).